Reading from the N-terminus, the 113-residue chain is ATP synthase epsilon chain (113 aa).

The protein belongs to the ATPase epsilon chain family. F-type ATPases have 2 components, CF(1) - the catalytic core - and CF(0) - the membrane proton channel. CF(1) has five subunits: alpha(3), beta(3), gamma(1), delta(1), epsilon(1). CF(0) has three main subunits: a, b and c.

It is found in the cell membrane. In terms of biological role, produces ATP from ADP in the presence of a proton gradient across the membrane. This Wolbachia pipientis subsp. Culex pipiens (strain wPip) protein is ATP synthase epsilon chain.